The primary structure comprises 119 residues: UPF0102 protein Nther_1376 (119 aa).

The protein belongs to the UPF0102 family.

The sequence is that of UPF0102 protein Nther_1376 from Natranaerobius thermophilus (strain ATCC BAA-1301 / DSM 18059 / JW/NM-WN-LF).